The following is a 103-amino-acid chain: Large ribosomal subunit protein bL21 (103 aa).

Belongs to the bacterial ribosomal protein bL21 family. As to quaternary structure, part of the 50S ribosomal subunit. Contacts protein L20.

This protein binds to 23S rRNA in the presence of protein L20. This Acidithiobacillus ferrooxidans (strain ATCC 23270 / DSM 14882 / CIP 104768 / NCIMB 8455) (Ferrobacillus ferrooxidans (strain ATCC 23270)) protein is Large ribosomal subunit protein bL21.